A 184-amino-acid chain; its full sequence is Peptide deformylase (184 aa).

2 residues coordinate Fe cation: Cys92 and His134. Residue Glu135 is part of the active site. Residue His138 coordinates Fe cation.

Belongs to the polypeptide deformylase family. Fe(2+) serves as cofactor.

It catalyses the reaction N-terminal N-formyl-L-methionyl-[peptide] + H2O = N-terminal L-methionyl-[peptide] + formate. In terms of biological role, removes the formyl group from the N-terminal Met of newly synthesized proteins. Requires at least a dipeptide for an efficient rate of reaction. N-terminal L-methionine is a prerequisite for activity but the enzyme has broad specificity at other positions. The chain is Peptide deformylase from Psychrobacter arcticus (strain DSM 17307 / VKM B-2377 / 273-4).